The chain runs to 311 residues: Putative ABC transporter ATP-binding protein MG467 (311 aa).

The ABC transporter domain maps to 84–310 (ITINKMWKNV…IVSNQLVRPL (227 aa)). Residue 122-129 (GSSGSGKT) participates in ATP binding.

The protein belongs to the ABC transporter superfamily.

In Mycoplasma genitalium (strain ATCC 33530 / DSM 19775 / NCTC 10195 / G37) (Mycoplasmoides genitalium), this protein is Putative ABC transporter ATP-binding protein MG467.